We begin with the raw amino-acid sequence, 188 residues long: RWD domain-containing protein 4 (188 aa).

Ser2 is subject to N-acetylserine. The 103-residue stretch at 9 to 111 (MELEALRSIY…EYAKDNKEQF (103 aa)) folds into the RWD domain. Positions 132 to 167 (TPNTAPSSKKKDKKEQLSKAQKRKLADKTDHKGELP) are disordered. Positions 155–166 (KLADKTDHKGEL) are enriched in basic and acidic residues.

The chain is RWD domain-containing protein 4 (RWDD4) from Homo sapiens (Human).